Reading from the N-terminus, the 426-residue chain is Tol-Pal system protein TolB (426 aa).

Residues 1–24 form the signal peptide; it reads MKLKSRFTSIIGVITLFFSQTVTA.

Belongs to the TolB family. The Tol-Pal system is composed of five core proteins: the inner membrane proteins TolA, TolQ and TolR, the periplasmic protein TolB and the outer membrane protein Pal. They form a network linking the inner and outer membranes and the peptidoglycan layer.

It localises to the periplasm. Part of the Tol-Pal system, which plays a role in outer membrane invagination during cell division and is important for maintaining outer membrane integrity. In Actinobacillus pleuropneumoniae serotype 3 (strain JL03), this protein is Tol-Pal system protein TolB.